We begin with the raw amino-acid sequence, 418 residues long: Adenosylhomocysteinase (418 aa).

3 residues coordinate substrate: Thr53, Asp125, and Glu150. 151 to 153 serves as a coordination point for NAD(+); that stretch reads TTT. Residues Lys180 and Asp184 each coordinate substrate. NAD(+) is bound by residues Asn185, 214 to 219, Glu237, Asn272, 293 to 295, and Asn340; these read GYGWCG and SGH.

The protein belongs to the adenosylhomocysteinase family. The cofactor is NAD(+).

It is found in the cytoplasm. The enzyme catalyses S-adenosyl-L-homocysteine + H2O = L-homocysteine + adenosine. It functions in the pathway amino-acid biosynthesis; L-homocysteine biosynthesis; L-homocysteine from S-adenosyl-L-homocysteine: step 1/1. May play a key role in the regulation of the intracellular concentration of adenosylhomocysteine. This is Adenosylhomocysteinase from Aquifex aeolicus (strain VF5).